Consider the following 122-residue polypeptide: Large ribosomal subunit protein uL14 (122 aa).

This sequence belongs to the universal ribosomal protein uL14 family. In terms of assembly, part of the 50S ribosomal subunit. Forms a cluster with proteins L3 and L19. In the 70S ribosome, L14 and L19 interact and together make contacts with the 16S rRNA in bridges B5 and B8.

Binds to 23S rRNA. Forms part of two intersubunit bridges in the 70S ribosome. This chain is Large ribosomal subunit protein uL14, found in Cellvibrio japonicus (strain Ueda107) (Pseudomonas fluorescens subsp. cellulosa).